A 450-amino-acid polypeptide reads, in one-letter code: Bifunctional protein GlmU (450 aa).

Positions 1–226 (MLAVAVLAAG…PDEVNGINNR (226 aa)) are pyrophosphorylase. Residues 7–10 (LAAG), lysine 21, glutamine 73, and 78–79 (GT) contribute to the UDP-N-acetyl-alpha-D-glucosamine site. Aspartate 103 is a Mg(2+) binding site. Positions 140, 155, 170, and 224 each coordinate UDP-N-acetyl-alpha-D-glucosamine. Asparagine 224 is a binding site for Mg(2+). A linker region spans residues 227-247 (KQLAQCEGVLQQRLRDYWMDE). Residues 248 to 450 (GVTFVDPASC…TKDNWANRSI (203 aa)) are N-acetyltransferase. UDP-N-acetyl-alpha-D-glucosamine is bound by residues arginine 329 and lysine 347. The active-site Proton acceptor is the histidine 359. 2 residues coordinate UDP-N-acetyl-alpha-D-glucosamine: tyrosine 362 and asparagine 373. Acetyl-CoA is bound by residues alanine 376, 382–383 (NY), alanine 419, and arginine 436.

In the N-terminal section; belongs to the N-acetylglucosamine-1-phosphate uridyltransferase family. The protein in the C-terminal section; belongs to the transferase hexapeptide repeat family. In terms of assembly, homotrimer. Mg(2+) serves as cofactor.

The protein localises to the cytoplasm. It catalyses the reaction alpha-D-glucosamine 1-phosphate + acetyl-CoA = N-acetyl-alpha-D-glucosamine 1-phosphate + CoA + H(+). The enzyme catalyses N-acetyl-alpha-D-glucosamine 1-phosphate + UTP + H(+) = UDP-N-acetyl-alpha-D-glucosamine + diphosphate. Its pathway is nucleotide-sugar biosynthesis; UDP-N-acetyl-alpha-D-glucosamine biosynthesis; N-acetyl-alpha-D-glucosamine 1-phosphate from alpha-D-glucosamine 6-phosphate (route II): step 2/2. It participates in nucleotide-sugar biosynthesis; UDP-N-acetyl-alpha-D-glucosamine biosynthesis; UDP-N-acetyl-alpha-D-glucosamine from N-acetyl-alpha-D-glucosamine 1-phosphate: step 1/1. It functions in the pathway bacterial outer membrane biogenesis; LPS lipid A biosynthesis. Its function is as follows. Catalyzes the last two sequential reactions in the de novo biosynthetic pathway for UDP-N-acetylglucosamine (UDP-GlcNAc). The C-terminal domain catalyzes the transfer of acetyl group from acetyl coenzyme A to glucosamine-1-phosphate (GlcN-1-P) to produce N-acetylglucosamine-1-phosphate (GlcNAc-1-P), which is converted into UDP-GlcNAc by the transfer of uridine 5-monophosphate (from uridine 5-triphosphate), a reaction catalyzed by the N-terminal domain. This Synechococcus sp. (strain CC9902) protein is Bifunctional protein GlmU.